The primary structure comprises 76 residues: Small ribosomal subunit protein uS17 (76 aa).

The protein belongs to the universal ribosomal protein uS17 family. As to quaternary structure, part of the 30S ribosomal subunit.

In terms of biological role, one of the primary rRNA binding proteins, it binds specifically to the 5'-end of 16S ribosomal RNA. This Dinoroseobacter shibae (strain DSM 16493 / NCIMB 14021 / DFL 12) protein is Small ribosomal subunit protein uS17.